Here is a 215-residue protein sequence, read N- to C-terminus: Cytokinin riboside 5'-monophosphate phosphoribohydrolase LOG3 (215 aa).

Substrate contacts are provided by residues Glu-84, 102 to 103 (RK), 119 to 125 (GYGTLEE), and Thr-131.

The protein belongs to the LOG family. In terms of tissue distribution, expressed in roots and shoots. Detected in root procambium, lateral root primordia, vascular tissues of immature leaves, axillary buds, style and ovular funiculus.

It is found in the cytoplasm. The protein localises to the nucleus. It catalyses the reaction N(6)-(dimethylallyl)adenosine 5'-phosphate + H2O = N(6)-dimethylallyladenine + D-ribose 5-phosphate. The catalysed reaction is 9-ribosyl-trans-zeatin 5'-phosphate + H2O = trans-zeatin + D-ribose 5-phosphate. Its function is as follows. Cytokinin-activating enzyme working in the direct activation pathway. Phosphoribohydrolase that converts inactive cytokinin nucleotides to the biologically active free-base forms. The chain is Cytokinin riboside 5'-monophosphate phosphoribohydrolase LOG3 (LOG3) from Arabidopsis thaliana (Mouse-ear cress).